We begin with the raw amino-acid sequence, 84 residues long: UPF0512 protein O (84 aa).

The protein belongs to the UPF0512 family.

This is UPF0512 protein O from Dictyostelium discoideum (Social amoeba).